We begin with the raw amino-acid sequence, 562 residues long: MESCLSFSSPPPTKKNIQEPVRPNAKFHKSVWGNHFLKYASNPEQIDYDADEQHEQLKEELRKKLVVNVTNERVEEQLKLIDAIQRLGVAYHFQREIDAVLNNLLLFRSNKDSDDIYMVSLRFRLLRQQGHNVSCSVFEKFKNIDGRFKDSLRDDVRGLLSLYEATHMRVHKEDILEEALEFTIYELEQVVKLSSNDTLLASEVIHALNMPIRKGLTRIEARHFISVYQHDKSHDETLLKFSKIDFNMLQKLHQRELADLTIWWEKLNVAEKMPYARDRFVECYFWGLGVYFEPQYSRARKMFVKVINLTSLIDDTYDSYGTFDELDLFTDAVKRWNVNETDKLPEYMRPLFMELLNVYNAMEEELKEEGVSYRVEYAKQSMIQIVTAYNDEAIWYHNGYVPTFDEYLKVALISCGYMLLSTISFVGMGVTTVTKPAFDWVTNNPLILIASCTINRLADDKVGHELEQERGHVASGVECYMKHNNATKQEVVIEFNKRISNAWKDINQECLHPLPVPLHLVVRPLYLACFMNVFYKDEDWYTHSNTQMKECINSLLVESVPY.

Residues aspartate 314, aspartate 318, and glutamate 467 each contribute to the Mg(2+) site. The DDXXD motif signature appears at 314-318 (DDTYD).

Belongs to the terpene synthase family. It depends on Mg(2+) as a cofactor. In terms of tissue distribution, predominantly expressed in root.

It catalyses the reaction (2E,6E)-farnesyl diphosphate = valerena-4,7(11)-diene + diphosphate. In terms of biological role, catalyzes formation of valerena-4,7(11)-diene, one of the active ingredients responsible for the sedative effect extracted from Valeriana officinalis root. This Valeriana officinalis (Valerian) protein is Valerena-4,7(11)-diene synthase (TPS2).